The chain runs to 86 residues: Serine protease inhibitor Kazal-type 4 (86 aa).

Positions 1-26 (MAMHLWLVTLTLVPLLGMDRELMVSA) are cleaved as a signal peptide. Residues 31–86 (FPRMPFCEHMAELPNCPQTPNLICGTDGLTYENECHLCLTRMKTMKDIQIMKDGQC) form the Kazal-like domain. Intrachain disulfides connect cysteine 37–cysteine 68, cysteine 46–cysteine 65, and cysteine 54–cysteine 86.

As to expression, expressed in the intestinal tract.

It is found in the secreted. This Mus musculus (Mouse) protein is Serine protease inhibitor Kazal-type 4 (Spink4).